The sequence spans 1036 residues: MDNEDKISISAKEEKILSFWKEQDIFQKTLDNREGCPTFSFYDGPPFATGLPHYGHLLAGTIKDVVCRYASMDGHYVPRRFGWDCHGVPVEYEVEKSLGLTEPGAIERFGVANFNEECRKIVFRYADEWKYFVDRIGRWVDFSATWRTMDLSFMESVWWVFRSLYDQGLVYEGTKVVPFSTKLGTPLSNFEAGQNYKEVDDPSVVVKFALQDNQGFLLAWTTTPWTLVSNMALAVHPELTYVRIKDKESGDEYILGQESLPRWFPDRESYEWIGQLSGKSLVGQSYEPLFPYFQDKKELGAFRILPADFIEESEGTGIVHMAPAFGEADFFACQEHNVPLVCPVDNQGCYTAEVKDFVGEYIKSADKGIARRLKNENKLFYQGTVRHRYPFCWRTDSPLIYKAVNSWFVAVEKVKSKMLKANESIHWTPGHIKQGRFGKWLEGARDWAISRNRYWGTPIPIWRSDDGELLVIGSIQELEALSGQKIVDLHRHFIDEIEINQNGKSFRRIPYVFDCWFDSGAMPYAQNHYPFERAEETEACFPADFIAEGLDQTRGWFYTLTVIAAALFDQPAFKNVIVNGIILAEDGNKMSKRLNNYPSPKMIMDAYGADALRLYLLNSVVVKAEDLRFSDKGVESVLKQVLLPLSNALAFYKTYAELYGFDPKETDNIELAEIDRWILSSLYSLLGKTRESMSQYDLHAAVNPFVDFIEDLTNWYIRRSRRRFWDAEDSTDRRAAFSTLYEVLVVFSKVIAPFIPFISEDMYQQLRGETDPESVHLCDFPHVVLEKILPNLERKMQDIREIVALGHSLRKEHKLKVRQPLQNVYIVGSQERMEALAQVGSLIGEELNVKDVHFCSETPEYVTTLIKPNFRTLGKKVGNRLPEIQRALAGLPQEQIQAFMHKGQMVVSLGEETISLDKEDITVSWASAEGFVARSSASFVAVLDCQLTEPLIMEGIARELVNKINTMRRNGKLHVSDRIAIRLHAPVIVQEAFALHKEYICEETLTTSVSVIDYKEGEEWDINGHAVSFVLERVER.

A 'HIGH' region motif is present at residues 46 to 56; sequence PFATGLPHYGH. The short motif at 589 to 593 is the 'KMSKS' region element; the sequence is KMSKR. Lys-592 lines the ATP pocket.

This sequence belongs to the class-I aminoacyl-tRNA synthetase family. IleS type 2 subfamily. Monomer. Requires Zn(2+) as cofactor.

It localises to the cytoplasm. The catalysed reaction is tRNA(Ile) + L-isoleucine + ATP = L-isoleucyl-tRNA(Ile) + AMP + diphosphate. Its function is as follows. Catalyzes the attachment of isoleucine to tRNA(Ile). As IleRS can inadvertently accommodate and process structurally similar amino acids such as valine, to avoid such errors it has two additional distinct tRNA(Ile)-dependent editing activities. One activity is designated as 'pretransfer' editing and involves the hydrolysis of activated Val-AMP. The other activity is designated 'posttransfer' editing and involves deacylation of mischarged Val-tRNA(Ile). The protein is Isoleucine--tRNA ligase of Chlamydia trachomatis serovar L2 (strain ATCC VR-902B / DSM 19102 / 434/Bu).